Consider the following 311-residue polypeptide: Glycerol-3-phosphate dehydrogenase [NAD(P)+] (311 aa).

4 residues coordinate NADPH: Trp11, Arg30, Arg31, and Lys95. Residues Lys95, Gly123, and Ser125 each contribute to the sn-glycerol 3-phosphate site. Ala127 is a binding site for NADPH. Sn-glycerol 3-phosphate contacts are provided by Lys177, Asp230, Ser240, Arg241, and Asn242. Lys177 acts as the Proton acceptor in catalysis. Arg241 contacts NADPH. Residues Val265 and Glu267 each contribute to the NADPH site.

Belongs to the NAD-dependent glycerol-3-phosphate dehydrogenase family.

Its subcellular location is the cytoplasm. It catalyses the reaction sn-glycerol 3-phosphate + NAD(+) = dihydroxyacetone phosphate + NADH + H(+). It carries out the reaction sn-glycerol 3-phosphate + NADP(+) = dihydroxyacetone phosphate + NADPH + H(+). It functions in the pathway membrane lipid metabolism; glycerophospholipid metabolism. In terms of biological role, catalyzes the reduction of the glycolytic intermediate dihydroxyacetone phosphate (DHAP) to sn-glycerol 3-phosphate (G3P), the key precursor for phospholipid synthesis. In Bartonella bacilliformis (strain ATCC 35685 / KC583 / Herrer 020/F12,63), this protein is Glycerol-3-phosphate dehydrogenase [NAD(P)+].